A 481-amino-acid chain; its full sequence is Cobyric acid synthase (481 aa).

Positions 248–435 (ALTVAWLAFS…LHGMFGADGF (188 aa)) constitute a GATase cobBQ-type domain. Residue Cys330 is the Nucleophile of the active site. His427 is a catalytic residue.

The protein belongs to the CobB/CobQ family. CobQ subfamily.

It participates in cofactor biosynthesis; adenosylcobalamin biosynthesis. Catalyzes amidations at positions B, D, E, and G on adenosylcobyrinic A,C-diamide. NH(2) groups are provided by glutamine, and one molecule of ATP is hydrogenolyzed for each amidation. The chain is Cobyric acid synthase from Cereibacter sphaeroides (strain ATCC 17023 / DSM 158 / JCM 6121 / CCUG 31486 / LMG 2827 / NBRC 12203 / NCIMB 8253 / ATH 2.4.1.) (Rhodobacter sphaeroides).